The sequence spans 154 residues: D-aminoacyl-tRNA deacylase (154 aa).

Residues 142-143 carry the Gly-cisPro motif, important for rejection of L-amino acids motif; that stretch reads GP.

It belongs to the DTD family. In terms of assembly, homodimer.

It localises to the cytoplasm. It catalyses the reaction glycyl-tRNA(Ala) + H2O = tRNA(Ala) + glycine + H(+). The catalysed reaction is a D-aminoacyl-tRNA + H2O = a tRNA + a D-alpha-amino acid + H(+). Functionally, an aminoacyl-tRNA editing enzyme that deacylates mischarged D-aminoacyl-tRNAs. Also deacylates mischarged glycyl-tRNA(Ala), protecting cells against glycine mischarging by AlaRS. Acts via tRNA-based rather than protein-based catalysis; rejects L-amino acids rather than detecting D-amino acids in the active site. By recycling D-aminoacyl-tRNA to D-amino acids and free tRNA molecules, this enzyme counteracts the toxicity associated with the formation of D-aminoacyl-tRNA entities in vivo and helps enforce protein L-homochirality. The protein is D-aminoacyl-tRNA deacylase of Polaromonas sp. (strain JS666 / ATCC BAA-500).